Reading from the N-terminus, the 122-residue chain is MIQTESMLEVADNSGARRVQCIKVLGGSHRRYAGIGDIIKVTVKEAIPRGRVKKGDVMTAVVVRTRKGVRRPDGSLIRFDENAAVLLNNNKAPVGTRIFGPVTRELRTEQFMKIISLAPEVL.

The protein belongs to the universal ribosomal protein uL14 family. In terms of assembly, part of the 50S ribosomal subunit. Forms a cluster with proteins L3 and L19. In the 70S ribosome, L14 and L19 interact and together make contacts with the 16S rRNA in bridges B5 and B8.

In terms of biological role, binds to 23S rRNA. Forms part of two intersubunit bridges in the 70S ribosome. The chain is Large ribosomal subunit protein uL14 from Alcanivorax borkumensis (strain ATCC 700651 / DSM 11573 / NCIMB 13689 / SK2).